Reading from the N-terminus, the 359-residue chain is Alpha-2-HS-glycoprotein (359 aa).

Residues 1-18 (MKSFVLLFCLAQLWGCHS) form the signal peptide. A Cystatin fetuin-A-type 1 domain is found at 27-133 (YKEPACDDPD…QFSVLFTKCD (107 aa)). Disulfide bonds link Cys-32–Cys-350, Cys-89–Cys-100, Cys-114–Cys-132, Cys-146–Cys-149, Cys-208–Cys-219, and Cys-230–Cys-248. The N-linked (GlcNAc...) asparagine glycan is linked to Asn-99. Phosphoserine is present on residues Ser-134, Ser-135, and Ser-138. The 113-residue stretch at 144–256 (KLCPDCPLLA…TCTLFQTQPV (113 aa)) folds into the Cystatin fetuin-A-type 2 domain. N-linked (GlcNAc...) asparagine glycosylation is found at Asn-156 and Asn-176. Residues 257–285 (IPQPQPDGAEAEAPSAVPDAAGPTPSAAG) are disordered. Ser-271 carries O-linked (GalNAc...) serine glycosylation. A compositionally biased stretch (low complexity) spans 276–285 (AAGPTPSAAG). O-linked (GalNAc...) threonine glycosylation is present at Thr-280. O-linked (GalNAc...) serine glycosylation is found at Ser-282 and Ser-296. Residue Thr-314 is modified to Phosphothreonine. Residues Ser-316, Ser-320, Ser-323, and Ser-325 each carry the phosphoserine modification. An O-linked (GalNAc...) threonine glycan is attached at Thr-334. O-linked (GalNAc...) serine; partial glycosylation occurs at Ser-341.

This sequence belongs to the fetuin family. In terms of processing, phosphorylated by FAM20C in the extracellular medium. In terms of tissue distribution, liver and bone.

The protein resides in the secreted. Functionally, promotes endocytosis, possesses opsonic properties and influences the mineral phase of bone. Suggested to have lymphocyte stimulating properties, lipid binding capability and to bind thyroid hormone. The protein is Alpha-2-HS-glycoprotein (AHSG) of Bos taurus (Bovine).